A 235-amino-acid polypeptide reads, in one-letter code: Probable inactive serine protease 37 (235 aa).

An N-terminal signal peptide occupies residues M1–S19. In terms of domain architecture, Peptidase S1 spans S20–K233. 3 disulfides stabilise this stretch: C40/C56, C131/C198, and C163/C177.

Belongs to the peptidase S1 family.

The protein localises to the cytoplasmic vesicle. It localises to the secretory vesicle. It is found in the acrosome. The protein resides in the secreted. Its function is as follows. Plays a role in male fertility. May have a role in sperm migration or binding to zona-intact eggs. Involved in the activation of the proacrosin/acrosin system. In Bos taurus (Bovine), this protein is Probable inactive serine protease 37.